The chain runs to 637 residues: 3D-(3,5/4)-trihydroxycyclohexane-1,2-dione hydrolase (637 aa).

Residue glutamate 66 coordinates thiamine diphosphate. Residues 442–522 form a thiamine pyrophosphate binding region; it reads SLPGDLQRLW…INVLLFDNSG (81 aa). Residues aspartate 493 and asparagine 520 each coordinate Mg(2+).

The protein belongs to the TPP enzyme family. The cofactor is Mg(2+). Thiamine diphosphate is required as a cofactor.

It carries out the reaction 3D-3,5/4-trihydroxycyclohexane-1,2-dione + H2O = 5-deoxy-D-glucuronate + H(+). The protein operates within polyol metabolism; myo-inositol degradation into acetyl-CoA; acetyl-CoA from myo-inositol: step 3/7. Its function is as follows. Involved in the cleavage of the C1-C2 bond of 3D-(3,5/4)-trihydroxycyclohexane-1,2-dione (THcHDO) to yield 5-deoxy-glucuronate (5DG). The polypeptide is 3D-(3,5/4)-trihydroxycyclohexane-1,2-dione hydrolase (Bacillus licheniformis (strain ATCC 14580 / DSM 13 / JCM 2505 / CCUG 7422 / NBRC 12200 / NCIMB 9375 / NCTC 10341 / NRRL NRS-1264 / Gibson 46)).